Reading from the N-terminus, the 401-residue chain is Imidazolonepropionase (401 aa).

Positions 70 and 72 each coordinate Fe(3+). Zn(2+) is bound by residues His-70 and His-72. The 4-imidazolone-5-propanoate site is built by Arg-79, Tyr-142, and His-175. Tyr-142 contacts N-formimidoyl-L-glutamate. Residue His-240 coordinates Fe(3+). His-240 serves as a coordination point for Zn(2+). Gln-243 is a binding site for 4-imidazolone-5-propanoate. A Fe(3+)-binding site is contributed by Asp-315. Residue Asp-315 coordinates Zn(2+). Residues Asn-317 and Gly-319 each coordinate N-formimidoyl-L-glutamate. Thr-320 contacts 4-imidazolone-5-propanoate.

It belongs to the metallo-dependent hydrolases superfamily. HutI family. Zn(2+) is required as a cofactor. It depends on Fe(3+) as a cofactor.

The protein localises to the cytoplasm. The enzyme catalyses 4-imidazolone-5-propanoate + H2O = N-formimidoyl-L-glutamate. It participates in amino-acid degradation; L-histidine degradation into L-glutamate; N-formimidoyl-L-glutamate from L-histidine: step 3/3. In terms of biological role, catalyzes the hydrolytic cleavage of the carbon-nitrogen bond in imidazolone-5-propanoate to yield N-formimidoyl-L-glutamate. It is the third step in the universal histidine degradation pathway. This is Imidazolonepropionase from Caulobacter sp. (strain K31).